The sequence spans 430 residues: Histidine--tRNA ligase (430 aa).

Belongs to the class-II aminoacyl-tRNA synthetase family. In terms of assembly, homodimer.

Its subcellular location is the cytoplasm. The catalysed reaction is tRNA(His) + L-histidine + ATP = L-histidyl-tRNA(His) + AMP + diphosphate + H(+). In Acinetobacter baumannii (strain ACICU), this protein is Histidine--tRNA ligase.